The chain runs to 174 residues: ATP synthase subunit b (174 aa).

A helical transmembrane segment spans residues 9 to 29; that stretch reads LPNTSLIFWEVVTFLILLALL.

Belongs to the ATPase B chain family. As to quaternary structure, F-type ATPases have 2 components, F(1) - the catalytic core - and F(0) - the membrane proton channel. F(1) has five subunits: alpha(3), beta(3), gamma(1), delta(1), epsilon(1). F(0) has three main subunits: a(1), b(2) and c(10-14). The alpha and beta chains form an alternating ring which encloses part of the gamma chain. F(1) is attached to F(0) by a central stalk formed by the gamma and epsilon chains, while a peripheral stalk is formed by the delta and b chains.

It localises to the cell membrane. In terms of biological role, f(1)F(0) ATP synthase produces ATP from ADP in the presence of a proton or sodium gradient. F-type ATPases consist of two structural domains, F(1) containing the extramembraneous catalytic core and F(0) containing the membrane proton channel, linked together by a central stalk and a peripheral stalk. During catalysis, ATP synthesis in the catalytic domain of F(1) is coupled via a rotary mechanism of the central stalk subunits to proton translocation. Its function is as follows. Component of the F(0) channel, it forms part of the peripheral stalk, linking F(1) to F(0). This chain is ATP synthase subunit b, found in Rubrobacter xylanophilus (strain DSM 9941 / JCM 11954 / NBRC 16129 / PRD-1).